A 708-amino-acid polypeptide reads, in one-letter code: MALALGEGGGGSRLRRQLESGGFAAAEYVKQLSQQSDGDRDLQEHRQRIQALQEETAQSLKRNVYQNYRQFIETAREISYLESEMYQLSHILTEQKGIMEAVTQALLLQADRDDPALGARRAAAADPFLPLSAKEAAASEEGRQRTLTTLLEKVEGCRDLLPESPGKYLVYNGDLLEYDADHMAQIQRVHAFLMNDCLLVATALPNRRGAYRYDALYPLEGLAVVNVKDNPPMKDMFKLLMFPESRIFQAENAKIKKEWLEVLEETKRNRALSEKRRLEQEALPRPAPTPPESTNPFEEEEEEEEEPSAEEEAVDLSLEWIQELPEDLDVCIAQRDFEGAVDLLDKLNEYLADKPVSQPVKELRAKVDERVRQLTDVLVFELSPDRSLRGGPRATRRAVSQLIRLGQSTKACELFLKNRAAAVHTAIRQLRIEGATLLYIHKLCHVFFTSLLETAREFETDFAGNNGCYSAFVVWARSSMRMFVDAFSKQVFDSKESLSTAAECVKVAKEHCKQLSDIGLDLTFIIHALLVKDIKGALQSYKDIIIEATKHRNSEEMWRRMNLMTPEALGKLREEMKSCGVGSFDQYTGDDCWVNLSYTVVAFTKQTMAFLEEALKLYFPELHMVLLESLVEIILVAVQHVDYSLRCEQDPEKKAFIRQNASFLYETVLPVVEKRFEEGVGKPAKQLQDLRNASRLMRINPESTTSVV.

In terms of domain architecture, PH spans 168–268; that stretch reads YLVYNGDLLE…WLEVLEETKR (101 aa). Residues 271–282 show a composition bias toward basic and acidic residues; sequence ALSEKRRLEQEA. The interval 271-314 is disordered; sequence ALSEKRRLEQEALPRPAPTPPESTNPFEEEEEEEEEPSAEEEAV. Over residues 297–314 the composition is skewed to acidic residues; it reads FEEEEEEEEEPSAEEEAV.

This sequence belongs to the EXO84 family. As to quaternary structure, the exocyst complex is composed of EXOC1, EXOC2, EXOC3, EXOC4, EXOC5, EXOC6, EXOC7 and EXOC8.

It is found in the cytoplasm. It localises to the perinuclear region. The protein localises to the cell projection. The protein resides in the growth cone. Component of the exocyst complex involved in the docking of exocytic vesicles with fusion sites on the plasma membrane. This is Exocyst complex component 8 (EXOC8) from Gallus gallus (Chicken).